Here is a 299-residue protein sequence, read N- to C-terminus: ATP phosphoribosyltransferase (299 aa).

The protein belongs to the ATP phosphoribosyltransferase family. Long subfamily. It depends on Mg(2+) as a cofactor.

The protein localises to the cytoplasm. The enzyme catalyses 1-(5-phospho-beta-D-ribosyl)-ATP + diphosphate = 5-phospho-alpha-D-ribose 1-diphosphate + ATP. It functions in the pathway amino-acid biosynthesis; L-histidine biosynthesis; L-histidine from 5-phospho-alpha-D-ribose 1-diphosphate: step 1/9. Its activity is regulated as follows. Feedback inhibited by histidine. Catalyzes the condensation of ATP and 5-phosphoribose 1-diphosphate to form N'-(5'-phosphoribosyl)-ATP (PR-ATP). Has a crucial role in the pathway because the rate of histidine biosynthesis seems to be controlled primarily by regulation of HisG enzymatic activity. The polypeptide is ATP phosphoribosyltransferase (Shewanella oneidensis (strain ATCC 700550 / JCM 31522 / CIP 106686 / LMG 19005 / NCIMB 14063 / MR-1)).